Here is an 85-residue protein sequence, read N- to C-terminus: Large ribosomal subunit protein eL43 (85 aa).

The C4-type zinc finger occupies 38–59; the sequence is CPVCGRKAVRRISTGIWQCQKC.

This sequence belongs to the eukaryotic ribosomal protein eL43 family. It depends on Zn(2+) as a cofactor.

This chain is Large ribosomal subunit protein eL43, found in Thermococcus sibiricus (strain DSM 12597 / MM 739).